Here is a 922-residue protein sequence, read N- to C-terminus: Lysine-specific demethylase 4 (922 aa).

The segment covering 1–15 (MASAATTTHFPSSRI) has biased composition (polar residues). Disordered stretches follow at residues 1–21 (MASA…EPCA) and 42–61 (SSSC…MFTD). The region spanning 87–130 (VLTFYPTMREFKNFSQYIKKIEQNGGHLKAGIAKIVAPEGWTPR) is the JmjN domain. Y213 contacts 2-oxoglutarate. Residues 223–388 (DAQVEEWNMN…YGKDAVLCDC (166 aa)) enclose the JmjC domain. Fe cation is bound by residues H265 and E267. 2-oxoglutarate contacts are provided by N275 and K283. Zn(2+) is bound by residues C314 and H320. Residue K321 coordinates 2-oxoglutarate. H356 contacts Fe cation. Residues C386 and C388 each coordinate Zn(2+). A disordered region spans residues 435-475 (KRRQSLADASKIAKRARLGASSTATDSDGSSGSSGSEEATE). Low complexity predominate over residues 453-475 (GASSTATDSDGSSGSSGSEEATE). The C2HC pre-PHD-type zinc finger occupies 639 to 675 (TTSCQLCELRGGALIPCQIGTDSTWAHVACALFNRRA). Residues 723–783 (WECVVCHRTD…GVVMICHKHE (61 aa)) form a PHD-type; degenerate zinc finger.

It belongs to the JHDM3 histone demethylase family. Fe(2+) is required as a cofactor.

It is found in the nucleus. The enzyme catalyses N(6),N(6),N(6)-trimethyl-L-lysyl(9)-[histone H3] + 2 2-oxoglutarate + 2 O2 = N(6)-methyl-L-lysyl(9)-[histone H3] + 2 formaldehyde + 2 succinate + 2 CO2. It catalyses the reaction N(6),N(6),N(6)-trimethyl-L-lysyl(36)-[histone H3] + 2 2-oxoglutarate + 2 O2 = N(6)-methyl-L-lysyl(36)-[histone H3] + 2 formaldehyde + 2 succinate + 2 CO2. Its function is as follows. Histone demethylase that specifically demethylates 'Lys-9' and 'Lys-36' residues of histone H3, thereby playing a central role in histone code. Demethylation of Lys residue generates formaldehyde and succinate. Involved in the negative regulation of lifespan in a germline-dependent fashion. The sequence is that of Lysine-specific demethylase 4 (jmjd-2) from Caenorhabditis elegans.